A 250-amino-acid chain; its full sequence is NAD(P)H-quinone oxidoreductase subunit S, chloroplastic (250 aa).

Residues 1–48 (MATSSITIPTIRTPIHRSKFLGQTHQFSTVNRSVFPPPKQQSKLYQVK) constitute a chloroplast transit peptide. A Glycyl lysine isopeptide (Lys-Gly) (interchain with G-Cter in ubiquitin) cross-link involves residue lysine 52. Composition is skewed to basic and acidic residues over residues 76–94 (QRNIEDEQETSKAENNETE) and 106–115 (VPEDGFEKEM). 2 disordered regions span residues 76-163 (QRNI…KPKA) and 222-250 (REKGPPGKNPKSCILEPLIEQMQKEEAAP). Over residues 136 to 146 (NPPPPPPPPPA) the composition is skewed to pro residues.

As to quaternary structure, part of the chloroplast NDH complex, composed of a mixture of chloroplast and nucleus encoded subunits. Component of the electron donor-binding subcomplex, at least composed of NDHS, NDHT and NDHU. Interacts with the NDH subcomplex A via the protein NDHT and NDHU. Arg-193 is the critical site for the high affinity binding of NDH to ferredoxin.

The protein localises to the plastid. It is found in the chloroplast thylakoid membrane. It catalyses the reaction a plastoquinone + NADH + (n+1) H(+)(in) = a plastoquinol + NAD(+) + n H(+)(out). The enzyme catalyses a plastoquinone + NADPH + (n+1) H(+)(in) = a plastoquinol + NADP(+) + n H(+)(out). In terms of biological role, NDH shuttles electrons from NAD(P)H:plastoquinone, via FMN and iron-sulfur (Fe-S) centers, to quinones in the photosynthetic chain and possibly in a chloroplast respiratory chain. The immediate electron acceptor for the enzyme in this species is believed to be plastoquinone. Couples the redox reaction to proton translocation, and thus conserves the redox energy in a proton gradient. Required for the efficient operation of ferredoxin-dependent plastoquinone reduction. Forms the electron donor-binding subcomplex in association with the NDHT and NDHU subunits. The sequence is that of NAD(P)H-quinone oxidoreductase subunit S, chloroplastic from Arabidopsis thaliana (Mouse-ear cress).